We begin with the raw amino-acid sequence, 440 residues long: Cell division protein DivIB (440 aa).

Positions 1–10 (MMDDKTKNDQ) are enriched in basic and acidic residues. 2 disordered regions span residues 1-97 (MMDD…DSNI) and 123-154 (QHQS…TQLK). At 1-174 (MMDDKTKNDQ…RRKRQKRIQY (174 aa)) the chain is on the cytoplasmic side. The segment covering 12-21 (ESNEDKDELE) has biased composition (acidic residues). Residues 27–39 (TSKKRRQRKRSKA) show a composition bias toward basic residues. Residues 78 to 87 (DSASSHANDN) are compositionally biased toward low complexity. A compositionally biased stretch (acidic residues) spans 88–97 (NIDDSTDSNI). Polar residues predominate over residues 124-134 (HQSAPNEQNSD). The helical transmembrane segment at 175–195 (SVITILVLLIAVILIYMFSPL) threads the bilayer. One can recognise a POTRA domain in the interval 196 to 264 (SKIAHVNING…NTLNVDITEN (69 aa)). Residues 196–440 (SKIAHVNING…KINKQSSKNN (245 aa)) are Extracellular-facing. Residues 397 to 440 (YRGNTSTQSESDKNVTKSSQEENQAKEELQSVLNKINKQSSKNN) are disordered. Residues 406-425 (ESDKNVTKSSQEENQAKEEL) are compositionally biased toward basic and acidic residues. Over residues 427–440 (SVLNKINKQSSKNN) the composition is skewed to polar residues.

It belongs to the FtsQ/DivIB family. DivIB subfamily.

It is found in the cell membrane. Functionally, cell division protein that may be involved in stabilizing or promoting the assembly of the division complex. This chain is Cell division protein DivIB, found in Staphylococcus aureus (strain MRSA252).